An 84-amino-acid polypeptide reads, in one-letter code: uncharacterized protein (84 aa).

It belongs to the chlamydial CPn_0711/CT_665/TC_0036 family.

This is an uncharacterized protein from Chlamydia muridarum (strain MoPn / Nigg).